Consider the following 164-residue polypeptide: Anterior gradient protein 2-B (164 aa).

A signal peptide spans 1–20 (MESVLKSLFVLLVATSFTLA). 2 consecutive short sequence motifs (homodimer stabilization; interchain) follow at residues 34–43 (SRGWGDNLEW) and 49–56 (EGLYKAKA).

This sequence belongs to the AGR family. Monomer and homodimer.

Its subcellular location is the secreted. The protein resides in the endoplasmic reticulum. This is Anterior gradient protein 2-B (agr2-b) from Xenopus laevis (African clawed frog).